Consider the following 2531-residue polypeptide: Neurogenic locus notch homolog protein 1 (2531 aa).

Positions 1-18 (MPRLLAPLLCLTLLPALA) are cleaved as a signal peptide. Residues 19 to 1725 (ARGLRCSQPS…VEPPLPSQLH (1707 aa)) are Extracellular-facing. EGF-like domains are found at residues 20–58 (RGLR…QRCQ), 59–99 (DPSP…PLCL), 102–139 (LANA…KSCQ), and 140–176 (QADP…PTCR). Cystine bridges form between Cys24–Cys37, Cys31–Cys46, Cys48–Cys57, Cys63–Cys74, Cys68–Cys87, Cys89–Cys98, Cys106–Cys117, Cys111–Cys127, Cys129–Cys138, Cys144–Cys155, Cys149–Cys164, Cys166–Cys175, Cys182–Cys195, Cys189–Cys204, Cys206–Cys215, Cys222–Cys233, Cys227–Cys243, Cys245–Cys254, Cys261–Cys272, Cys266–Cys281, Cys283–Cys292, Cys299–Cys312, Cys306–Cys321, Cys323–Cys332, Cys339–Cys350, Cys344–Cys359, Cys361–Cys370, Cys376–Cys387, Cys381–Cys398, Cys400–Cys409, Cys416–Cys429, Cys423–Cys438, and Cys440–Cys449. Asn41 carries N-linked (GlcNAc...) asparagine glycosylation. Ser65 carries an O-linked (Glc...) serine glycan. The O-linked (Fuc...) threonine glycan is linked to Thr73. A glycan (O-linked (Fuc...) threonine) is linked at Thr116. O-linked (Glc...) serine glycosylation occurs at Ser146. Residues 178 to 216 (DVNECSQNPGLCRHGGTCHNEIGSYRCACRATHTGPHCE) form the EGF-like 5; calcium-binding domain. Residue Thr194 is glycosylated (O-linked (Fuc...) threonine). The 38-residue stretch at 218-255 (PYVPCSPSPCQNGGTCRPTGDTTHECACLPGFAGQNCE) folds into the EGF-like 6 domain. Thr232 carries an O-linked (Fuc...) threonine; alternate glycan. O-linked (GalNAc...) threonine; alternate glycosylation is present at Thr232. The region spanning 257–293 (NVDDCPGNNCKNGGACVDGVNTYNCRCPPEWTGQYCT) is the EGF-like 7; calcium-binding domain. Residues 295-333 (DVDECQLMPNACQNGGTCHNSHGGYNCVCVNGWTGEDCS) form the EGF-like 8; calcium-binding domain. Thr311 carries an O-linked (Fuc...) threonine glycan. Residues 335-371 (NIDDCASAACFQGATCHDRVASFYCECPHGRTGLLCH) form the EGF-like 9; calcium-binding domain. Ser341 is a glycosylation site (O-linked (Glc...) serine). O-linked (Fuc...) threonine glycosylation is present at Thr349. The EGF-like 10 domain maps to 372 to 410 (LNDACISNPCNEGSNCDTNPVNGKAICTCPSGYTGPACS). Ser378 carries an O-linked (Glc...) serine glycan. Positions 412–450 (DVDECALGANPCEHAGKCLNTLGSFECQCLQGYTGPRCE) constitute an EGF-like 11; calcium-binding domain. The interval 420–421 (AN) is interaction with DLL4. Residues Thr432 and Ser435 each coordinate Ca(2+). Ser435 is a glycosylation site (O-linked (Glc...) serine). The tract at residues 448 to 452 (RCEID) is interaction with DLL4. Residues Asp452, Val453, and Glu455 each coordinate Ca(2+). The region spanning 452–488 (DVNECISNPCQNDATCLDQIGEFQCICMPGYEGVYCE) is the EGF-like 12; calcium-binding domain. 3 disulfide bridges follow: Cys456–Cys467, Cys461–Cys476, and Cys478–Cys487. Ser458 carries an O-linked (Glc...) serine glycan. Thr466 carries O-linked (Fuc...) threonine glycosylation. Ca(2+) contacts are provided by Asp469 and Gln470. Residues Asn490, Thr491, and Glu493 each contribute to the Ca(2+) site. Positions 490 to 526 (NTDECASSPCLHNGRCVDKINEFLCQCPKGFSGHLCQ) constitute an EGF-like 13; calcium-binding domain. 75 disulfide bridges follow: Cys494–Cys505, Cys499–Cys514, Cys516–Cys525, Cys532–Cys543, Cys537–Cys552, Cys554–Cys563, Cys570–Cys580, Cys575–Cys589, Cys591–Cys600, Cys607–Cys618, Cys612–Cys627, Cys629–Cys638, Cys645–Cys655, Cys650–Cys664, Cys666–Cys675, Cys682–Cys693, Cys687–Cys702, Cys704–Cys713, Cys720–Cys730, Cys725–Cys739, Cys741–Cys750, Cys757–Cys768, Cys762–Cys777, Cys779–Cys788, Cys795–Cys806, Cys800–Cys815, Cys817–Cys826, Cys833–Cys844, Cys838–Cys855, Cys857–Cys866, Cys873–Cys884, Cys878–Cys893, Cys895–Cys904, Cys911–Cys922, Cys916–Cys931, Cys933–Cys942, Cys949–Cys960, Cys954–Cys969, Cys971–Cys980, Cys987–Cys998, Cys992–Cys1007, Cys1009–Cys1018, Cys1025–Cys1036, Cys1030–Cys1045, Cys1047–Cys1056, Cys1063–Cys1074, Cys1068–Cys1083, Cys1085–Cys1094, Cys1101–Cys1122, Cys1116–Cys1131, Cys1133–Cys1142, Cys1149–Cys1160, Cys1154–Cys1169, Cys1171–Cys1180, Cys1187–Cys1198, Cys1192–Cys1207, Cys1209–Cys1218, Cys1225–Cys1244, Cys1238–Cys1253, Cys1255–Cys1264, Cys1271–Cys1284, Cys1276–Cys1293, Cys1295–Cys1304, Cys1311–Cys1322, Cys1316–Cys1334, Cys1336–Cys1345, Cys1352–Cys1363, Cys1357–Cys1372, Cys1374–Cys1383, Cys1391–Cys1403, Cys1397–Cys1414, Cys1416–Cys1425, Cys1449–Cys1472, Cys1454–Cys1467, and Cys1463–Cys1479. Ser496 is a glycosylation site (O-linked (Glc...) serine). Ca(2+) is bound by residues Asp507 and Lys508. Residues 528–564 (DVDECASTPCKNGAKCLDGPNTYTCVCTEGYTGTHCE) form the EGF-like 14; calcium-binding domain. Residue Ser534 is glycosylated (O-linked (Glc...) serine). The EGF-like 15; calcium-binding domain maps to 566–601 (DIDECDPDPCHYGLCKDGVATFTCLCQPGYTGHHCE). The region spanning 603–639 (NINECHSQPCRHGGTCQDRDNYYLCLCLKGTTGPNCE) is the EGF-like 16; calcium-binding domain. Ser609 carries an O-linked (Glc...) serine glycan. Thr617 carries an O-linked (Fuc...) threonine glycan. Residues 641–676 (NLDDCASNPCDSGTCLDKIDGYECACEPGYTGSMCN) form the EGF-like 17; calcium-binding domain. Ser647 carries an O-linked (Glc...) serine glycan. Residues 678–714 (NIDECAGSPCHNGGTCEDGIAGFTCRCPEGYHDPTCL) form the EGF-like 18; calcium-binding domain. O-linked (Fuc...) threonine glycosylation occurs at Thr692. In terms of domain architecture, EGF-like 19; calcium-binding spans 716–751 (EVNECNSNPCIHGACRDGLNGYKCDCAPGWSGTNCD). O-linked (Glc...) serine glycosylation occurs at Ser722. The 37-residue stretch at 753–789 (NNNECESNPCVNGGTCKDMTSGYVCTCREGFSGPNCQ) folds into the EGF-like 20; calcium-binding domain. A glycan (O-linked (Glc...) serine) is linked at Ser759. O-linked (Fuc...) threonine glycosylation occurs at Thr767. An O-linked (GlcNAc) serine glycan is attached at Ser784. The 37-residue stretch at 791–827 (NINECASNPCLNQGTCIDDVAGYKCNCPLPYTGATCE) folds into the EGF-like 21; calcium-binding domain. A glycan (O-linked (Glc...) serine) is linked at Ser797. A glycan (O-linked (Fuc...) threonine) is linked at Thr805. Residues 829–867 (VLAPCATSPCKNSGVCKESEDYESFSCVCPTGWQGQTCE) form the EGF-like 22 domain. The EGF-like 23; calcium-binding domain occupies 869 to 905 (DINECVKSPCRHGASCQNTNGSYRCLCQAGYTGRNCE). The N-linked (GlcNAc...) asparagine glycan is linked to Asn888. O-linked (GlcNAc) threonine glycosylation is present at Thr900. One can recognise an EGF-like 24 domain in the interval 907–943 (DIDDCRPNPCHNGGSCTDGVNAAFCDCLPGFQGAFCE). Ser921 carries an O-linked (Fuc) serine glycan. Positions 945–981 (DINECASNPCQNGANCTDCVDSYTCTCPTGFNGIHCE) constitute an EGF-like 25; calcium-binding domain. Ser951 carries an O-linked (Glc...) serine glycan. The N-linked (GlcNAc...) asparagine glycan is linked to Asn959. Residues 983 to 1019 (NTPDCTESSCFNGGTCVDGINSFTCLCPPGFTGSYCQ) form the EGF-like 26 domain. O-linked (Fuc...) threonine glycosylation is present at Thr997. The EGF-like 27; calcium-binding domain occupies 1021–1057 (DVNECDSRPCLHGGTCQDSYGTYKCTCPQGYTGLNCQ). An O-linked (Glc...) serine glycan is attached at Ser1027. Thr1035 is a glycosylation site (O-linked (Fuc...) threonine). EGF-like domains lie at 1059–1095 (LVRW…FNCD) and 1097–1143 (LSVS…SYCE). Residue Ser1065 is glycosylated (O-linked (Glc...) serine). The EGF-like 30; calcium-binding domain maps to 1145-1181 (EVDECSPNPCQNGATCTDYLGGFSCKCVAGYHGSNCS). Thr1159 carries an O-linked (Fuc...) threonine glycan. N-linked (GlcNAc...) asparagine glycosylation occurs at Asn1179. One can recognise an EGF-like 31; calcium-binding domain in the interval 1183-1219 (EINECLSQPCQNGGTCIDLTNTYKCSCPRGTQGVHCE). The O-linked (Glc...) serine glycan is linked to Ser1189. Residue Thr1197 is glycosylated (O-linked (Fuc...) threonine). One can recognise an EGF-like 32; calcium-binding domain in the interval 1221-1265 (NVDDCHPPLDPASRSPKCFNNGTCVDQVGGYTCTCPPGFVGERCE). Residue Asn1241 is glycosylated (N-linked (GlcNAc...) asparagine). 4 EGF-like domains span residues 1267–1305 (DVNE…RRCE), 1307–1346 (VING…ATCE), 1348–1384 (DART…PECQ), and 1387–1426 (ASSP…LLCH). O-linked (Glc...) serine glycosylation is present at Ser1273. Thr1362 is a glycosylation site (O-linked (Fuc...) threonine). A glycan (O-linked (GlcNAc...) threonine) is linked at Thr1379. An O-linked (Fuc...) threonine; alternate glycan is attached at Thr1402. Thr1402 carries O-linked (GalNAc...) threonine; alternate glycosylation. LNR repeat units lie at residues 1449-1489 (CELP…PWKN), 1490-1531 (CTQS…CNPL), and 1532-1571 (YDQY…RLAA). 4 residues coordinate Ca(2+): Asp1457, Asn1460, Asp1475, and Asp1478. An N-linked (GlcNAc...) asparagine glycan is attached at Asn1489. 5 cysteine pairs are disulfide-bonded: Cys1490–Cys1514, Cys1496–Cys1509, Cys1505–Cys1521, Cys1536–Cys1549, and Cys1545–Cys1561. Asn1587 carries N-linked (GlcNAc...) asparagine glycosylation. An O-linked (GalNAc...) threonine glycan is attached at Thr1715. The segment at 1718-1750 (PPLPSQLHLMYVAAAAFVLLFFVGCGVLLSRKR) is interaction with PSEN1. Residues 1726–1746 (LMYVAAAAFVLLFFVGCGVLL) form a helical membrane-spanning segment. Over 1747–2531 (SRKRRRQHGQ…QITHIPEAFK (785 aa)) the chain is Cytoplasmic. Lys1749 is covalently cross-linked (Glycyl lysine isopeptide (Lys-Gly) (interchain with G-Cter in ubiquitin)). The segment at 1770–1798 (KKKRREPLGEDSVGLKPLKNASDGALMDD) is disordered. Phosphothreonine is present on Thr1851. ANK repeat units lie at residues 1917–1946 (TGET…DANI), 1950–1980 (MGRT…DLDA), 1984–2013 (DGTT…DVNA), 2017–2046 (LGKS…NKDM), and 2050–2079 (KEET…NRDI). Positions 1937–1945 (LLEASADAN) are HIF1AN-binding. Asn1945 bears the (3S)-3-hydroxyasparagine; by HIF1AN mark. Residues 2004 to 2012 (LINSHADVN) form an HIF1AN-binding region. (3S)-3-hydroxyasparagine; by HIF1AN is present on Asn2012. Disordered regions lie at residues 2141–2185 (SATQ…DSSS), 2382–2428 (QPQN…SLPV), and 2440–2531 (PTSL…EAFK). Residues 2382–2395 (QPQNLQPPSQPHLS) are compositionally biased toward low complexity. The span at 2440–2478 (PTSLPSSMVPPMTTTQFLTPPSQHSYSSSPVDNTPSHQL) shows a compositional bias: polar residues. The segment covering 2488–2503 (PSPESPDQWSSSSPHS) has biased composition (low complexity). Residues 2504–2524 (NISDWSEGISSPPTSMPSQIT) show a composition bias toward polar residues.

It belongs to the NOTCH family. As to quaternary structure, heterodimer of a C-terminal fragment N(TM) and an N-terminal fragment N(EC) which are probably linked by disulfide bonds. Interacts with DNER, DTX1, DTX2 and RBPJ/RBPSUH. Also interacts with MAML1, MAML2 and MAML3 which act as transcriptional coactivators for NOTCH1. Notch 1 intracellular domain interacts with SNW1; the interaction involves multimerized NOTCH1 NICD and is implicated in a formation of an intermediate preactivation complex which associates with DNA-bound CBF-1/RBPJ. The activated membrane-bound form interacts with AAK1 which promotes NOTCH1 stabilization. Forms a trimeric complex with FBXW7 and SGK1. Interacts with HIF1AN. HIF1AN negatively regulates the function of notch intracellular domain (NICD), accelerating myogenic differentiation. Interacts (via NICD) with SNAI1 (via zinc fingers); the interaction induces SNAI1 degradation via MDM2-mediated ubiquitination and inhibits SNAI1-induced cell invasion. Interacts (via NICD) with MDM2A. Interacts (via NICD) with BCL6; the interaction decreases MAML1 recruitment by NOTCH1 NICD on target genes DNA and inhibits NOTCH1 transactivation activity. Interacts with THBS4. Interacts (via the EGF-like repeat region) with CCN3 (via CTCK domain). Interacts (via EGF-like domains) with DLL4 (via N-terminal DSL and MNNL domains). Interacts with ZMIZ1. Interacts (via NICD domain) with MEGF10 (via the cytoplasmic domain). Interacts with DLL1 and JAG1. Interacts (via NICD domain) with PRAG1. Forms a complex with PRAG1, N1ICD and MAML1, in a MAML1-dependent manner. Interacts (via transmembrane region) with PSEN1; the interaction is direct. Interacts with ZFP64. In terms of processing, synthesized in the endoplasmic reticulum as an inactive form which is proteolytically cleaved by a furin-like convertase in the trans-Golgi network before it reaches the plasma membrane to yield an active, ligand-accessible form. Cleavage results in a C-terminal fragment N(TM) and a N-terminal fragment N(EC). Following ligand binding, it is cleaved by ADAM17 to yield a membrane-associated intermediate fragment called notch extracellular truncation (NEXT). Following endocytosis, this fragment is then cleaved by one of the catalytic subunits of gamma-secretase (PSEN1 or PSEN2) to release a Notch-derived peptide containing the intracellular domain (NICD) from the membrane. Phosphorylated. Post-translationally, O-glycosylated on the EGF-like domains. O-glucosylated at Ser-435 by KDELC1 and KDELC2. Contains both O-linked fucose and O-linked glucose in the EGF-like domains 11, 12 and 13, which are interacting with the residues on DLL4. O-linked glycosylation by GALNT11 is involved in determination of left/right symmetry: glycosylation promotes activation of NOTCH1, possibly by promoting cleavage by ADAM17, modulating the balance between motile and immotile (sensory) cilia at the left-right organiser (LRO). MFNG-, RFNG- and LFNG-mediated modification of O-fucose residues at specific EGF-like domains results in inhibition of its activation by JAG1 and enhancement of its activation by DLL1 via an increased binding to DLL1. In terms of processing, ubiquitinated. Undergoes 'Lys-29'-linked polyubiquitination by ITCH; promotes the lysosomal degradation of non-activated internalized NOTCH1. Deubiquitination by USP12 is required for transport of internalized non-activated receptor from late endosomes to lysosomes for degradation. Monoubiquitination at Lys-1749 is required for activation by gamma-secretase cleavage, it promotes interaction with AAK1, which stabilizes it. Deubiquitination by EIF3F is necessary for nuclear import of activated Notch. Hydroxylated at Asn-1945 and Asn-2012 by HIF1AN. Hydroxylation reduces affinity for HI1AN and may thus indirectly modulate negative regulation of NICD. Expressed in the brain, kidney and spleen. Expressed in postnatal central nervous system (CNS) germinal zones and, in early postnatal life, within numerous cells throughout the CNS. Found in both subventricular and ventricular germinal zones.

It localises to the cell membrane. Its subcellular location is the late endosome membrane. It is found in the nucleus. In terms of biological role, functions as a receptor for membrane-bound ligands Jagged-1 (JAG1), Jagged-2 (JAG2) and Delta-1 (DLL1) to regulate cell-fate determination. Upon ligand activation through the released notch intracellular domain (NICD) it forms a transcriptional activator complex with RBPJ/RBPSUH and activates genes of the enhancer of split locus. Affects the implementation of differentiation, proliferation and apoptotic programs. Involved in angiogenesis; negatively regulates endothelial cell proliferation and migration and angiogenic sprouting. Involved in the maturation of both CD4(+) and CD8(+) cells in the thymus. Important for follicular differentiation and possibly cell fate selection within the follicle. During cerebellar development, functions as a receptor for neuronal DNER and is involved in the differentiation of Bergmann glia. Represses neuronal and myogenic differentiation. May play an essential role in postimplantation development, probably in some aspect of cell specification and/or differentiation. May be involved in mesoderm development, somite formation and neurogenesis. May enhance HIF1A function by sequestering HIF1AN away from HIF1A. Required for the THBS4 function in regulating protective astrogenesis from the subventricular zone (SVZ) niche after injury. Involved in determination of left/right symmetry by modulating the balance between motile and immotile (sensory) cilia at the left-right organiser (LRO). This is Neurogenic locus notch homolog protein 1 (Notch1) from Rattus norvegicus (Rat).